A 54-amino-acid chain; its full sequence is Small ribosomal subunit protein uS14 (54 aa).

Cys-19, Cys-22, Cys-37, and Cys-40 together coordinate Zn(2+).

It belongs to the universal ribosomal protein uS14 family. Zinc-binding uS14 subfamily. As to quaternary structure, part of the 30S ribosomal subunit. It depends on Zn(2+) as a cofactor.

Its function is as follows. Binds 16S rRNA, required for the assembly of 30S particles. This is Small ribosomal subunit protein uS14 from Aeropyrum pernix (strain ATCC 700893 / DSM 11879 / JCM 9820 / NBRC 100138 / K1).